The following is a 124-amino-acid chain: MADLAKIEEQLSSLTLMQAAELVKMLEEKWCVSAAAPVAVAAAGAAPAAEAVAEKTEFEIVLIAAGDKKVEVIKAVKDITGLGLIEAKKLVDEAPKLMKSNVKKAEAEEIKGKLEAAGAKVELK.

Belongs to the bacterial ribosomal protein bL12 family. In terms of assembly, homodimer. Part of the ribosomal stalk of the 50S ribosomal subunit. Forms a multimeric L10(L12)X complex, where L10 forms an elongated spine to which 2 to 4 L12 dimers bind in a sequential fashion. Binds GTP-bound translation factors.

Forms part of the ribosomal stalk which helps the ribosome interact with GTP-bound translation factors. Is thus essential for accurate translation. This Rickettsia akari (strain Hartford) protein is Large ribosomal subunit protein bL12.